The chain runs to 319 residues: Transcriptional regulator LsrR (319 aa).

Residues 32–55 constitute a DNA-binding region (H-T-H motif); that stretch reads QSEISERLGLTRLKVSRLLEKGHQ.

Belongs to the SorC transcriptional regulatory family.

It localises to the cytoplasm. Its activity is regulated as follows. Inactivated by phosphorylated autoinducer-2 (phospho-AI-2). Phospho-AI-2 acts by binding to LsrR, which is then unable to bind to the promoter regions, allowing the transcription of the target genes. Transcriptional regulator that represses the expression of the lsr operon (lsrACDBFGE) in the absence of the quorum-sensing signaling molecule autoinducer 2 (AI-2). It also represses the expression of the lsrRK operon. Acts by binding to the intergenic region between the lsr operon and lsrR. In the presence of phosphorylated autoinducer-2 (phospho-AI-2), LsrR is inactivated, leading to the transcription of the genes. The regulatory function of LsrR was thought to be limited to the lsr operon, but it was subsequently shown to be involved, directly or indirectly, in the regulation of SPI-1 and flagella genes. It negatively regulates the expression of those genes, which reduces the ability of Salmonella to invade host cells. The polypeptide is Transcriptional regulator LsrR (Salmonella typhimurium (strain LT2 / SGSC1412 / ATCC 700720)).